Consider the following 67-residue polypeptide: Phycobilisome 7.8 kDa linker polypeptide, allophycocyanin-associated, core (67 aa).

A CpcD-like domain is found at 1–56 (MRMFRITACLPSPSKIRTQRELQNTFFTKLVPYDAWFREQQRIQKLGGKIIKVELA).

It belongs to the phycobilisome linker protein family.

It localises to the cellular thylakoid membrane. In terms of biological role, rod linker protein, associated with allophycocyanin. Linker polypeptides determine the state of aggregation and the location of the disk-shaped phycobiliprotein units within the phycobilisome and modulate their spectroscopic properties in order to mediate a directed and optimal energy transfer. The protein is Phycobilisome 7.8 kDa linker polypeptide, allophycocyanin-associated, core (apcC) of Synechococcus sp. (strain ATCC 27144 / PCC 6301 / SAUG 1402/1) (Anacystis nidulans).